The following is a 271-amino-acid chain: Aminoglycoside 3'-phosphotransferase (271 aa).

The active-site Proton acceptor is the D198.

The protein belongs to the aminoglycoside phosphotransferase family.

The enzyme catalyses kanamycin A + ATP = kanamycin 3'-phosphate + ADP + H(+). Its function is as follows. Resistance to kanamycin and structurally-related aminoglycosides, including amikacin. This chain is Aminoglycoside 3'-phosphotransferase, found in Salmonella typhimurium.